We begin with the raw amino-acid sequence, 263 residues long: Putative ankyrin repeat domain-containing protein 20A12 pseudogene (263 aa).

Coiled coils occupy residues 65–121 and 171–263; these read KKDL…MLES and NQVF…IQLH.

The protein is Putative ankyrin repeat domain-containing protein 20A12 pseudogene of Homo sapiens (Human).